A 479-amino-acid chain; its full sequence is ESX-1 secretion system ATPase EccB1 (479 aa).

At 1-44 (MAGFRLTTKVQVSGWRFLLRRVEHAIVRRDTRMFDDPLQFYSRA) the chain is on the cytoplasmic side. A helical transmembrane segment spans residues 45-65 (VFAGVVVSVLICLGAALMAYF). The Periplasmic portion of the chain corresponds to 66–479 (KPLGKQGSDQ…NPRKVASGEG (414 aa)). A disulfide bridge links Cys-152 with Cys-347.

It belongs to the EccB family. Part of the ESX-1 / type VII secretion system (T7SS), which is composed of cytosolic and membrane components. The ESX-1 membrane complex is composed of EccB1, EccCa1, EccCb1, EccD1 and EccE1.

It is found in the cell inner membrane. Its function is as follows. An ATPase. Part of the ESX-1 / type VII specialized secretion system (T7SS), which exports several proteins including EsxA and EsxB. Plays a role in DNA conjugation, in both donor and recipient strains. The polypeptide is ESX-1 secretion system ATPase EccB1 (Mycolicibacterium smegmatis (strain MKD8) (Mycobacterium smegmatis)).